Here is a 55-residue protein sequence, read N- to C-terminus: ATP synthase F(0) complex subunit 8 (55 aa).

A helical membrane pass occupies residues 7–24 (NPWFFIMLLSWLTFSLII). The tract at residues 35 to 55 (NPPSNKTTTHTKTTPWTWPWT) is disordered. The segment covering 37-55 (PSNKTTTHTKTTPWTWPWT) has biased composition (low complexity).

Belongs to the ATPase protein 8 family. Component of the ATP synthase complex composed at least of ATP5F1A/subunit alpha, ATP5F1B/subunit beta, ATP5MC1/subunit c (homooctomer), MT-ATP6/subunit a, MT-ATP8/subunit 8, ATP5ME/subunit e, ATP5MF/subunit f, ATP5MG/subunit g, ATP5MK/subunit k, ATP5MJ/subunit j, ATP5F1C/subunit gamma, ATP5F1D/subunit delta, ATP5F1E/subunit epsilon, ATP5PF/subunit F6, ATP5PB/subunit b, ATP5PD/subunit d, ATP5PO/subunit OSCP. ATP synthase complex consists of a soluble F(1) head domain (subunits alpha(3) and beta(3)) - the catalytic core - and a membrane F(0) domain - the membrane proton channel (subunits c, a, 8, e, f, g, k and j). These two domains are linked by a central stalk (subunits gamma, delta, and epsilon) rotating inside the F1 region and a stationary peripheral stalk (subunits F6, b, d, and OSCP).

The protein localises to the mitochondrion membrane. Its function is as follows. Subunit 8, of the mitochondrial membrane ATP synthase complex (F(1)F(0) ATP synthase or Complex V) that produces ATP from ADP in the presence of a proton gradient across the membrane which is generated by electron transport complexes of the respiratory chain. ATP synthase complex consist of a soluble F(1) head domain - the catalytic core - and a membrane F(1) domain - the membrane proton channel. These two domains are linked by a central stalk rotating inside the F(1) region and a stationary peripheral stalk. During catalysis, ATP synthesis in the catalytic domain of F(1) is coupled via a rotary mechanism of the central stalk subunits to proton translocation. In vivo, can only synthesize ATP although its ATP hydrolase activity can be activated artificially in vitro. Part of the complex F(0) domain. The chain is ATP synthase F(0) complex subunit 8 from Chaetura pelagica (Chimney swift).